Reading from the N-terminus, the 236-residue chain is Small ribosomal subunit protein uS2c (236 aa).

Belongs to the universal ribosomal protein uS2 family.

It localises to the plastid. It is found in the chloroplast. This chain is Small ribosomal subunit protein uS2c (rps2), found in Acorus calamus var. americanus (American sweet flag).